The sequence spans 485 residues: Amyloid beta A4 precursor protein-binding family B member 1-interacting protein (485 aa).

A compositionally biased stretch (polar residues) spans 84 to 107 (QAQKTSGNQQSVVTQPSTGTNNDF). Positions 84-157 (QAQKTSGNQQ…LSQEEQEARA (74 aa)) are disordered. Pro residues predominate over residues 125–147 (LPPPPPAPDLDLPPPPPPPPPEP). One can recognise a Ras-associating domain in the interval 175-262 (KKLVVKVHMY…KVLFLEKKEK (88 aa)). The PH domain occupies 305-414 (VPELEGALYL…WVTGIRIAKY (110 aa)).

Belongs to the MRL family.

The protein resides in the cell membrane. The protein localises to the cytoplasm. Its subcellular location is the cytoskeleton. Functionally, appears to function in the signal transduction from Ras activation to actin cytoskeletal remodeling. The protein is Amyloid beta A4 precursor protein-binding family B member 1-interacting protein (APBB1IP) of Gallus gallus (Chicken).